The primary structure comprises 30 residues: Large ribosomal subunit protein bL25 (30 aa).

It belongs to the bacterial ribosomal protein bL25 family. As to quaternary structure, part of the 50S ribosomal subunit; part of the 5S rRNA/L5/L18/L25 subcomplex. Contacts the 5S rRNA. Binds to the 5S rRNA independently of L5 and L18.

Its function is as follows. This is one of the proteins that binds to the 5S RNA in the ribosome where it forms part of the central protuberance. The polypeptide is Large ribosomal subunit protein bL25 (rplY) (Anabaena variabilis).